Reading from the N-terminus, the 274-residue chain is NH(3)-dependent NAD(+) synthetase (274 aa).

An ATP-binding site is contributed by 46–53; it reads GISGGQDS. D52 lines the Mg(2+) pocket. Position 140 (R140) interacts with deamido-NAD(+). T160 lines the ATP pocket. E165 contributes to the Mg(2+) binding site. Deamido-NAD(+) contacts are provided by K173 and D180. 2 residues coordinate ATP: K189 and T211. 260-261 is a binding site for deamido-NAD(+); the sequence is HK.

The protein belongs to the NAD synthetase family. In terms of assembly, homodimer.

It catalyses the reaction deamido-NAD(+) + NH4(+) + ATP = AMP + diphosphate + NAD(+) + H(+). It participates in cofactor biosynthesis; NAD(+) biosynthesis; NAD(+) from deamido-NAD(+) (ammonia route): step 1/1. Functionally, catalyzes the ATP-dependent amidation of deamido-NAD to form NAD. Uses ammonia as a nitrogen source. The protein is NH(3)-dependent NAD(+) synthetase of Streptococcus suis (strain 05ZYH33).